The following is a 418-amino-acid chain: Putative ion-transport protein YfeO (418 aa).

The next 12 helical transmembrane spans lie at 10–30 (LLLSLPAVAIGIASSLILIVV), 54–74 (DSPLWIIGVLTLTGIAVGLVI), 99–119 (ALPGLIVALILGLAGGVSLGP), 120–140 (EHPIMTVNIALAVAIGARLLP), 149–169 (ILASAGTIGALFGTPVAAALI), 186–206 (LFAPLMAAAAGALTTGLFFHP), 223–243 (ILSGAIVAAIAIAAGMVAVWC), 258–278 (VLVLGIGGFILGILGVIGGPV), 300–320 (DYFLLAVIKLAALVVAAASGF), 322–342 (GGRIFPAVFVGVALGLMLHEH), 343–363 (VPAVPAAITVSCAILGIVLVV), and 371–391 (LFMAAVVVPNTTLLPLLCIVM).

It belongs to the chloride channel (TC 2.A.49) family.

It localises to the cell membrane. This chain is Putative ion-transport protein YfeO, found in Escherichia coli O8 (strain IAI1).